The chain runs to 610 residues: tRNA uridine 5-carboxymethylaminomethyl modification enzyme MnmG (610 aa).

14 to 19 contacts FAD; that stretch reads GAGHAG. NAD(+) is bound at residue 274-288; sequence GPRYCPSIEDKIVKF.

Belongs to the MnmG family. As to quaternary structure, homodimer. Heterotetramer of two MnmE and two MnmG subunits. It depends on FAD as a cofactor.

The protein resides in the cytoplasm. NAD-binding protein involved in the addition of a carboxymethylaminomethyl (cmnm) group at the wobble position (U34) of certain tRNAs, forming tRNA-cmnm(5)s(2)U34. This Chlamydia trachomatis serovar L2b (strain UCH-1/proctitis) protein is tRNA uridine 5-carboxymethylaminomethyl modification enzyme MnmG.